The primary structure comprises 95 residues: Co-chaperonin GroES (95 aa).

Belongs to the GroES chaperonin family. Heptamer of 7 subunits arranged in a ring. Interacts with the chaperonin GroEL.

The protein localises to the cytoplasm. Its function is as follows. Together with the chaperonin GroEL, plays an essential role in assisting protein folding. The GroEL-GroES system forms a nano-cage that allows encapsulation of the non-native substrate proteins and provides a physical environment optimized to promote and accelerate protein folding. GroES binds to the apical surface of the GroEL ring, thereby capping the opening of the GroEL channel. This is Co-chaperonin GroES from Staphylococcus saprophyticus subsp. saprophyticus (strain ATCC 15305 / DSM 20229 / NCIMB 8711 / NCTC 7292 / S-41).